Reading from the N-terminus, the 353-residue chain is Methionine import ATP-binding protein MetN (353 aa).

Positions 6 to 249 constitute an ABC transporter domain; sequence LKNVDVDFPQ…PKQELTKKFV (244 aa). 41 to 48 serves as a coordination point for ATP; the sequence is GFSGAGKS.

Belongs to the ABC transporter superfamily. Methionine importer (TC 3.A.1.24) family. As to quaternary structure, the complex is composed of two ATP-binding proteins (MetN), two transmembrane proteins (MetI) and a solute-binding protein (MetQ).

The protein localises to the cell membrane. The catalysed reaction is L-methionine(out) + ATP + H2O = L-methionine(in) + ADP + phosphate + H(+). It catalyses the reaction D-methionine(out) + ATP + H2O = D-methionine(in) + ADP + phosphate + H(+). Functionally, part of the ABC transporter complex MetNIQ involved in methionine import. Responsible for energy coupling to the transport system. The sequence is that of Methionine import ATP-binding protein MetN from Lactobacillus acidophilus (strain ATCC 700396 / NCK56 / N2 / NCFM).